The primary structure comprises 34 residues: Protamine-Y1/Y2 (34 aa).

The segment at 1 to 34 (PRRRRQASRPVRRRRRYRRSTAARRRRRVVRRRR) is disordered.

As to expression, testis.

It is found in the nucleus. It localises to the chromosome. Protamines substitute for histones in the chromatin of sperm during the haploid phase of spermatogenesis. They compact sperm DNA into a highly condensed, stable and inactive complex. The polypeptide is Protamine-Y1/Y2 (Thunnus thynnus (Atlantic bluefin tuna)).